A 269-amino-acid polypeptide reads, in one-letter code: Tryptophan synthase alpha chain (269 aa).

Catalysis depends on proton acceptor residues Glu49 and Asp60.

The protein belongs to the TrpA family. As to quaternary structure, tetramer of two alpha and two beta chains.

The catalysed reaction is (1S,2R)-1-C-(indol-3-yl)glycerol 3-phosphate + L-serine = D-glyceraldehyde 3-phosphate + L-tryptophan + H2O. The protein operates within amino-acid biosynthesis; L-tryptophan biosynthesis; L-tryptophan from chorismate: step 5/5. Functionally, the alpha subunit is responsible for the aldol cleavage of indoleglycerol phosphate to indole and glyceraldehyde 3-phosphate. The sequence is that of Tryptophan synthase alpha chain from Actinobacillus pleuropneumoniae serotype 5b (strain L20).